We begin with the raw amino-acid sequence, 140 residues long: ATP synthase epsilon chain (140 aa).

Belongs to the ATPase epsilon chain family. As to quaternary structure, F-type ATPases have 2 components, CF(1) - the catalytic core - and CF(0) - the membrane proton channel. CF(1) has five subunits: alpha(3), beta(3), gamma(1), delta(1), epsilon(1). CF(0) has three main subunits: a, b and c.

It is found in the cell inner membrane. Its function is as follows. Produces ATP from ADP in the presence of a proton gradient across the membrane. This chain is ATP synthase epsilon chain, found in Colwellia psychrerythraea (strain 34H / ATCC BAA-681) (Vibrio psychroerythus).